The sequence spans 508 residues: MKLAYWMYAGPAHIGTLRIASSFKNVHAIMHAPIGDDYFNVMRSMLSRERDFTPVTTSVVDRNVLARGSQEKVVDNIVRKDAEEHPDLIVLTPTCTSSILQEDLHNFVERAQLEAKGDVMLADVNHYRYNELQAADRTLDQIVQYYIEKARKRGELAEGKTAKPSVNIIGTTTLGFHNNHDCTELKRLMADLGIKVNTLIPEGASVNDLKKMSQAWFNLVPYRELGLTTARYLEEQFGTPYIDITPMGVVETARCIRKIQQVINAQGAEVDYENFINEQTLHVSQAAWFSRSIDCQNLTGKKAVVFGDNTHAAAITKILAREMGIHVVWAGTYCKYDAGWFREQVSEYCDEVLISEDHGEIGDAIARVEPSAIFGTQMERHVGKRLDIPCGVIAAPIHVQNFPIGYKPFMGYEGTNQITDLIYNSFTLGMEDHLLEIFGGHDTKEVITRGISADSDLNWTKDGQAELNKIPGFVRGKVKRNTEKFARDRGFKEINAEVLYAAKEAVGA.

Residue aspartate 36 participates in [4Fe-4S] cluster binding. The active-site Proton donor is aspartate 294. 429-430 contacts substrate; sequence GM.

It belongs to the ChlB/BchB/BchZ family. As to quaternary structure, protochlorophyllide reductase is composed of three subunits; ChlL, ChlN and ChlB. Forms a heterotetramer of two ChlB and two ChlN subunits. The cofactor is [4Fe-4S] cluster.

The catalysed reaction is chlorophyllide a + oxidized 2[4Fe-4S]-[ferredoxin] + 2 ADP + 2 phosphate = protochlorophyllide a + reduced 2[4Fe-4S]-[ferredoxin] + 2 ATP + 2 H2O. It participates in porphyrin-containing compound metabolism; chlorophyll biosynthesis (light-independent). Its function is as follows. Component of the dark-operative protochlorophyllide reductase (DPOR) that uses Mg-ATP and reduced ferredoxin to reduce ring D of protochlorophyllide (Pchlide) to form chlorophyllide a (Chlide). This reaction is light-independent. The NB-protein (ChlN-ChlB) is the catalytic component of the complex. The protein is Light-independent protochlorophyllide reductase subunit B of Nostoc punctiforme (strain ATCC 29133 / PCC 73102).